The following is a 228-amino-acid chain: Lipoprotein LpqN (228 aa).

A signal peptide spans 1–19 (MKHFTAAVATVALSLALAG). Cysteine 20 carries the N-palmitoyl cysteine lipid modification. Cysteine 20 is lipidated: S-diacylglycerol cysteine. A disordered region spans residues 26–53 (TDSAPTTSPTTTSPTTSTTTTSATTSAQ). The span at 28 to 52 (SAPTTSPTTTSPTTSTTTTSATTSA) shows a compositional bias: low complexity.

Interacts with the periplasmic loop domains of the mycolate transporters MmpL3 and MmpL11. Also interacts with secreted cell envelope biosynthetic enzymes such as Ag85A. These interactions are weak and may require a putative mycobacterial adapter protein or molecule. Interacts with human ubiquitin ligase CBL.

It localises to the cell membrane. The protein resides in the secreted. Involved in cell envelope biogenesis. May act as a membrane fusion protein, connecting MmpL transporters with periplasmic proteins, and play a role in cell envelope lipid changes during biofilm maturation. In terms of biological role, is also a virulence factor required for intracellular survival. Associates with CBL, a host ubiquitin ligase, and probably blocks the normal functions of CBL and disturbs CBL-mediated antibacterial activity. Interaction counteracts antibacterial defense but causes a reciprocal enhancement of antiviral defense. The protein is Lipoprotein LpqN of Mycobacterium tuberculosis (strain ATCC 25618 / H37Rv).